Consider the following 475-residue polypeptide: tRNA-2-methylthio-N(6)-dimethylallyladenosine synthase (475 aa).

In terms of domain architecture, MTTase N-terminal spans 3–120 (KKLHIKTWGC…LPEMIDQIKD (118 aa)). Positions 12, 49, 83, 157, 161, and 164 each coordinate [4Fe-4S] cluster. The region spanning 143 to 375 (RAEGPSAFVS…QDRITQQAMR (233 aa)) is the Radical SAM core domain. Residues 378–441 (RQMVGTVQRI…TNSLRGVFIR (64 aa)) enclose the TRAM domain.

The protein belongs to the methylthiotransferase family. MiaB subfamily. In terms of assembly, monomer. Requires [4Fe-4S] cluster as cofactor.

The protein localises to the cytoplasm. It carries out the reaction N(6)-dimethylallyladenosine(37) in tRNA + (sulfur carrier)-SH + AH2 + 2 S-adenosyl-L-methionine = 2-methylsulfanyl-N(6)-dimethylallyladenosine(37) in tRNA + (sulfur carrier)-H + 5'-deoxyadenosine + L-methionine + A + S-adenosyl-L-homocysteine + 2 H(+). Catalyzes the methylthiolation of N6-(dimethylallyl)adenosine (i(6)A), leading to the formation of 2-methylthio-N6-(dimethylallyl)adenosine (ms(2)i(6)A) at position 37 in tRNAs that read codons beginning with uridine. This is tRNA-2-methylthio-N(6)-dimethylallyladenosine synthase from Shewanella pealeana (strain ATCC 700345 / ANG-SQ1).